We begin with the raw amino-acid sequence, 340 residues long: Cathepsin S (340 aa).

The first 17 residues, 1-17 (MRAPGHAAIRWLFWMPL), serve as a signal peptide directing secretion. Residues 18-122 (VCSVAMEQLQ…VTFRSYSNRT (105 aa)) constitute a propeptide, activation peptide. Asparagine 120 is a glycosylation site (N-linked (GlcNAc...) asparagine). 4 cysteine pairs are disulfide-bonded: cysteine 134-cysteine 233, cysteine 144-cysteine 189, cysteine 178-cysteine 222, and cysteine 281-cysteine 329. Cysteine 147 is an active-site residue. Residues histidine 287 and asparagine 307 contribute to the active site.

Belongs to the peptidase C1 family. Widely expressed with highest expression found in non-skeletal tissues. Relatively high levels found in skeletal tissues. Expressed in spleen, B cells, dendritic cells and macrophages.

The protein resides in the lysosome. Its subcellular location is the secreted. It is found in the cytoplasmic vesicle. It localises to the phagosome. The enzyme catalyses Similar to cathepsin L, but with much less activity on Z-Phe-Arg-|-NHMec, and more activity on the Z-Val-Val-Arg-|-Xaa compound.. Its function is as follows. Thiol protease. Key protease responsible for the removal of the invariant chain from MHC class II molecules and MHC class II antigen presentation. The bond-specificity of this proteinase is in part similar to the specificities of cathepsin L. The polypeptide is Cathepsin S (Ctss) (Mus musculus (Mouse)).